We begin with the raw amino-acid sequence, 330 residues long: HTH-type transcriptional regulator GanR (330 aa).

The 56-residue stretch at 2–57 (ATIKDIAQEAGFSISTVSRVLNNDESLSVPDETREKIYEAAEKLNYRKKTVRPLVK) folds into the HTH lacI-type domain. Residues 4-23 (IKDIAQEAGFSISTVSRVLN) constitute a DNA-binding region (H-T-H motif).

In terms of biological role, negatively regulates the expression of the ganSPQAB operon. Inhibits transcription of the operon by binding to an operator in the promoter region. In the presence of galactobiose, GanR dissociates from the promoter, resulting in the expression of the gan operon. The polypeptide is HTH-type transcriptional regulator GanR (Bacillus subtilis (strain 168)).